The primary structure comprises 310 residues: GPN-loop GTPase 2 (310 aa).

A2 bears the N-acetylalanine mark. 19–24 contributes to the GTP binding site; the sequence is GSGKTT. Positions 76–78 match the Gly-Pro-Asn (GPN)-loop; involved in dimer interface motif; the sequence is GPN. GTP is bound at residue 178-181; it reads SKMD.

Belongs to the GPN-loop GTPase family. As to quaternary structure, heterodimers with GPN1 or GPN3. Binds to RNA polymerase II (RNAPII).

In terms of biological role, small GTPase required for proper localization of RNA polymerase II and III (RNAPII and RNAPIII). May act at an RNAP assembly step prior to nuclear import. This is GPN-loop GTPase 2 from Sus scrofa (Pig).